The primary structure comprises 376 residues: Alpha-2,8-sialyltransferase 8E (376 aa).

Residues 17-37 (TLLFIFICAFALVTLLQQILY) traverse the membrane as a helical segment. N-linked (GlcNAc...) asparagine glycosylation occurs at N56. Disulfide bonds link C164-C313 and C178-C373. Substrate contacts are provided by residues N192 and 214–216 (NPS). The N-linked (GlcNAc...) asparagine glycan is linked to N241. Residue 300–302 (STG) participates in substrate binding. H348 acts as the Proton donor/acceptor in catalysis.

This sequence belongs to the glycosyltransferase 29 family. In terms of tissue distribution, expressed in liver.

It localises to the golgi apparatus membrane. The enzyme catalyses a ganglioside GT1b (d18:1(4E)) + CMP-N-acetyl-beta-neuraminate = a ganglioside GQ1b (d18:1(4E)) + CMP + H(+). The catalysed reaction is a ganglioside GQ1c (d18:1(4E)) + CMP-N-acetyl-beta-neuraminate = a ganglioside GP1c (d18:1(4E)) + CMP + H(+). It catalyses the reaction a ganglioside GD3 (d18:1(4E)) + CMP-N-acetyl-beta-neuraminate = a ganglioside GT3 (d18:1(4E)) + CMP + H(+). It carries out the reaction a ganglioside GD1a (d18:1(4E)) + CMP-N-acetyl-beta-neuraminate = a ganglioside GT1a (d18:1(4E)) + CMP + H(+). The enzyme catalyses a ganglioside GM1b (d18:1(4E)) + CMP-N-acetyl-beta-neuraminate = a ganglioside GD1c (d18:1(4E)) + CMP + H(+). It participates in protein modification; protein glycosylation. Its function is as follows. Involved in the synthesis of gangliosides GD1c, GT1a, GQ1b, GP1c and GT3 from GD1a, GT1b, GM1b and GD3 respectively. In Rattus norvegicus (Rat), this protein is Alpha-2,8-sialyltransferase 8E.